A 305-amino-acid chain; its full sequence is VNDPFITTDYMTYMFKYDTVHGQWKHHEVKVKDSKTLLFGEKEVAVFGCRNPEEIPWAAAGAEYVVESTGVFTDKDKAAAHIKGGAKKVIISAPSKDAPMFVCGVNEKEYKSDIDIVSNASCTTNCPAPLAKVINDRFGIVEGLMTTVHAMTATQKTVDGPSSKDWRGGRAASFNIIPSSTGAAKAVGKVLPELNGKLTGMAFRVPTVDVSVVDLTVRLAKPATYEQIKAAIKEESEGNLKGILGYVDEDLVSTDFQGDSRSSIFDAKAGIALNDNFVKLVSWYDNEWGYSTRVVDLIRHMHSTK.

NAD(+) contacts are provided by aspartate 3 and arginine 50. Residues 121-123, threonine 152, 181-182, and arginine 204 each bind D-glyceraldehyde 3-phosphate; these read SCT and TG. Cysteine 122 serves as the catalytic Nucleophile. Position 286 (asparagine 286) interacts with NAD(+).

It belongs to the glyceraldehyde-3-phosphate dehydrogenase family. Homotetramer.

The protein resides in the cytoplasm. It catalyses the reaction D-glyceraldehyde 3-phosphate + phosphate + NAD(+) = (2R)-3-phospho-glyceroyl phosphate + NADH + H(+). It functions in the pathway carbohydrate degradation; glycolysis; pyruvate from D-glyceraldehyde 3-phosphate: step 1/5. Its function is as follows. Key enzyme in glycolysis that catalyzes the first step of the pathway by converting D-glyceraldehyde 3-phosphate (G3P) into 3-phospho-D-glyceroyl phosphate. Essential for the maintenance of cellular ATP levels and carbohydrate metabolism. The protein is Glyceraldehyde-3-phosphate dehydrogenase 2, cytosolic (GAPC) of Hordeum vulgare (Barley).